The primary structure comprises 100 residues: Urease subunit gamma (100 aa).

It belongs to the urease gamma subunit family. Heterotrimer of UreA (gamma), UreB (beta) and UreC (alpha) subunits. Three heterotrimers associate to form the active enzyme.

It is found in the cytoplasm. The enzyme catalyses urea + 2 H2O + H(+) = hydrogencarbonate + 2 NH4(+). It participates in nitrogen metabolism; urea degradation; CO(2) and NH(3) from urea (urease route): step 1/1. The sequence is that of Urease subunit gamma from Haemophilus influenzae (strain 86-028NP).